Reading from the N-terminus, the 229-residue chain is Stage III sporulation protein AG (229 aa).

Residues 30 to 50 (YHYFLFVFVLGVSFMLVSQLF) form a helical membrane-spanning segment. 2 disordered regions span residues 64-93 (AVSSQHSADSKEKTAEVFKASKSDKPKDSI) and 136-159 (SNKNTTTEETDKEGGKRSVTDQSS). The span at 71-93 (ADSKEKTAEVFKASKSDKPKDSI) shows a compositional bias: basic and acidic residues.

It is found in the cell membrane. The polypeptide is Stage III sporulation protein AG (spoIIIAG) (Bacillus subtilis (strain 168)).